The primary structure comprises 83 residues: ATP synthase subunit c (83 aa).

The next 2 helical transmembrane spans lie at 9-29 and 51-71; these read LICV…GIGI and MVFM…GLVI.

It belongs to the ATPase C chain family. In terms of assembly, F-type ATPases have 2 components, F(1) - the catalytic core - and F(0) - the membrane proton channel. F(1) has five subunits: alpha(3), beta(3), gamma(1), delta(1), epsilon(1). F(0) has three main subunits: a(1), b(2) and c(10-14). The alpha and beta chains form an alternating ring which encloses part of the gamma chain. F(1) is attached to F(0) by a central stalk formed by the gamma and epsilon chains, while a peripheral stalk is formed by the delta and b chains.

The protein resides in the cell inner membrane. In terms of biological role, f(1)F(0) ATP synthase produces ATP from ADP in the presence of a proton or sodium gradient. F-type ATPases consist of two structural domains, F(1) containing the extramembraneous catalytic core and F(0) containing the membrane proton channel, linked together by a central stalk and a peripheral stalk. During catalysis, ATP synthesis in the catalytic domain of F(1) is coupled via a rotary mechanism of the central stalk subunits to proton translocation. Functionally, key component of the F(0) channel; it plays a direct role in translocation across the membrane. A homomeric c-ring of between 10-14 subunits forms the central stalk rotor element with the F(1) delta and epsilon subunits. This Desulfotalea psychrophila (strain LSv54 / DSM 12343) protein is ATP synthase subunit c.